Reading from the N-terminus, the 263-residue chain is Probable ABC transporter permease protein ycf63 (263 aa).

6 helical membrane-spanning segments follow: residues 43–63 (LVGP…SMVF), 82–102 (AVIV…VIIA), 136–156 (LVFP…TISL), 159–179 (SIAI…SIFL), 199–219 (LCFG…SSGG), and 230–250 (SVVT…YFMF).

It belongs to the MlaE permease family.

The protein resides in the plastid. It is found in the chloroplast membrane. In terms of biological role, could be part of an ABC transporter complex. The sequence is that of Probable ABC transporter permease protein ycf63 (ycf63) from Porphyra purpurea (Red seaweed).